We begin with the raw amino-acid sequence, 495 residues long: tRNA(Ile)-lysidine synthase (495 aa).

26–31 (SGGSDS) lines the ATP pocket.

This sequence belongs to the tRNA(Ile)-lysidine synthase family.

The protein resides in the cytoplasm. The enzyme catalyses cytidine(34) in tRNA(Ile2) + L-lysine + ATP = lysidine(34) in tRNA(Ile2) + AMP + diphosphate + H(+). In terms of biological role, ligates lysine onto the cytidine present at position 34 of the AUA codon-specific tRNA(Ile) that contains the anticodon CAU, in an ATP-dependent manner. Cytidine is converted to lysidine, thus changing the amino acid specificity of the tRNA from methionine to isoleucine. This Bartonella tribocorum (strain CIP 105476 / IBS 506) protein is tRNA(Ile)-lysidine synthase.